The primary structure comprises 450 residues: tRNA-2-methylthio-N(6)-dimethylallyladenosine synthase (450 aa).

Residues 3–118 form the MTTase N-terminal domain; it reads KKVFIKTFGC…LPELLQQRER (116 aa). [4Fe-4S] cluster is bound by residues cysteine 12, cysteine 49, cysteine 81, cysteine 155, cysteine 159, and cysteine 162. Residues 141–376 form the Radical SAM core domain; the sequence is SVQGASAFVS…VIDTHIRSIS (236 aa). Residues 377–440 form the TRAM domain; sequence ASRVGTVQRI…AYTLRGQYCA (64 aa).

Belongs to the methylthiotransferase family. MiaB subfamily. As to quaternary structure, monomer. [4Fe-4S] cluster is required as a cofactor.

Its subcellular location is the cytoplasm. The enzyme catalyses N(6)-dimethylallyladenosine(37) in tRNA + (sulfur carrier)-SH + AH2 + 2 S-adenosyl-L-methionine = 2-methylsulfanyl-N(6)-dimethylallyladenosine(37) in tRNA + (sulfur carrier)-H + 5'-deoxyadenosine + L-methionine + A + S-adenosyl-L-homocysteine + 2 H(+). In terms of biological role, catalyzes the methylthiolation of N6-(dimethylallyl)adenosine (i(6)A), leading to the formation of 2-methylthio-N6-(dimethylallyl)adenosine (ms(2)i(6)A) at position 37 in tRNAs that read codons beginning with uridine. The polypeptide is tRNA-2-methylthio-N(6)-dimethylallyladenosine synthase (Verminephrobacter eiseniae (strain EF01-2)).